Consider the following 512-residue polypeptide: Bifunctional NAD(P)H-hydrate repair enzyme Nnr (512 aa).

Residues 1–220 (MPIVAYDPDK…GVPPRLVLPQ (220 aa)) are NAD(P)H-hydrate epimerase. Residues 11–218 (VREADRAAVR…PIGVPPRLVL (208 aa)) enclose the YjeF N-terminal domain. The interval 58-62 (NNGGD) is NADPHX 1; for epimerase activity. Asparagine 59 and aspartate 127 together coordinate K(+). The NADPHX 1; for epimerase activity stretch occupies residues 131-137 (GTGSGGE). Residue aspartate 161 coordinates (6S)-NADPHX. Threonine 164 lines the K(+) pocket. One can recognise a YjeF C-terminal domain in the interval 228–509 (GYEDLSHMRL…HQAALVLGGL (282 aa)). Residues 228–512 (GYEDLSHMRL…ALVLGGLGDV (285 aa)) form an ADP-dependent (S)-NAD(P)H-hydrate dehydratase region. Position 335 (glycine 335) interacts with (6S)-NADPHX. Residues 385-391 (HEGEAAC) are NADPHX 2; for dehydratase activity. Residues 421–425 (KGRNS) and 440–449 (HPNLSVPGSG) each bind ADP. Aspartate 450 lines the (6S)-NADPHX pocket.

The protein in the N-terminal section; belongs to the NnrE/AIBP family. This sequence in the C-terminal section; belongs to the NnrD/CARKD family. Requires K(+) as cofactor.

It carries out the reaction (6S)-NADHX + ADP = AMP + phosphate + NADH + H(+). The catalysed reaction is (6S)-NADPHX + ADP = AMP + phosphate + NADPH + H(+). The enzyme catalyses (6R)-NADHX = (6S)-NADHX. It catalyses the reaction (6R)-NADPHX = (6S)-NADPHX. In terms of biological role, bifunctional enzyme that catalyzes the epimerization of the S- and R-forms of NAD(P)HX and the dehydration of the S-form of NAD(P)HX at the expense of ADP, which is converted to AMP. This allows the repair of both epimers of NAD(P)HX, a damaged form of NAD(P)H that is a result of enzymatic or heat-dependent hydration. This Thermanaerovibrio acidaminovorans (strain ATCC 49978 / DSM 6589 / Su883) (Selenomonas acidaminovorans) protein is Bifunctional NAD(P)H-hydrate repair enzyme Nnr (nnr).